The primary structure comprises 266 residues: MATKILSLLALLALFASATNAFIIPQCSLAPSSIITQFLPPVTSMGFEHPAVQAYRLQQAIAASVLQQPISQLQQQSLAHLTIQTIATQQQQQFLPALSHLAMVNPAAYLQQQLLASNPLALANVVANQPQQQLQQFLPALSQLAMVNPAAYLQQQQLLSSSPLAVANAPTYLQQQLLQQIVPALTQLVVANPAAYLQQLLPFNQLTMSNSAAYLQQRQQLLNPLAVANPLVAAFLQQQQLLPYNQFSLINPVLSRQQPIVGGAIF.

A signal peptide spans 1-21; the sequence is MATKILSLLALLALFASATNA.

This sequence belongs to the zein family. Interacts with OP10 (via N-terminus). In terms of tissue distribution, expressed in endosperm, mainly in the peripheral regions.

Its function is as follows. Zeins are major seed storage proteins. The protein is 22 kDa alpha-zein 4 of Zea mays (Maize).